Reading from the N-terminus, the 501-residue chain is Probable cytosol aminopeptidase (501 aa).

Mn(2+)-binding residues include lysine 268 and aspartate 273. Lysine 280 is a catalytic residue. 3 residues coordinate Mn(2+): aspartate 291, aspartate 350, and glutamate 352. Arginine 354 is a catalytic residue.

Belongs to the peptidase M17 family. Requires Mn(2+) as cofactor.

The protein localises to the cytoplasm. It carries out the reaction Release of an N-terminal amino acid, Xaa-|-Yaa-, in which Xaa is preferably Leu, but may be other amino acids including Pro although not Arg or Lys, and Yaa may be Pro. Amino acid amides and methyl esters are also readily hydrolyzed, but rates on arylamides are exceedingly low.. The catalysed reaction is Release of an N-terminal amino acid, preferentially leucine, but not glutamic or aspartic acids.. Its function is as follows. Presumably involved in the processing and regular turnover of intracellular proteins. Catalyzes the removal of unsubstituted N-terminal amino acids from various peptides. This is Probable cytosol aminopeptidase from Idiomarina loihiensis (strain ATCC BAA-735 / DSM 15497 / L2-TR).